We begin with the raw amino-acid sequence, 445 residues long: Phosphoglucosamine mutase (445 aa).

The active-site Phosphoserine intermediate is the serine 101. Mg(2+) contacts are provided by serine 101, aspartate 240, aspartate 242, and aspartate 244. A Phosphoserine modification is found at serine 101.

It belongs to the phosphohexose mutase family. Mg(2+) is required as a cofactor. In terms of processing, activated by phosphorylation.

The catalysed reaction is alpha-D-glucosamine 1-phosphate = D-glucosamine 6-phosphate. In terms of biological role, catalyzes the conversion of glucosamine-6-phosphate to glucosamine-1-phosphate. This is Phosphoglucosamine mutase from Pseudomonas aeruginosa (strain UCBPP-PA14).